The sequence spans 380 residues: Glutamine synthetase, chloroplastic (380 aa).

One can recognise a GS beta-grasp domain in the interval 35-125; it reads MAAEYIWADG…VMCEVFAPDG (91 aa). The region spanning 132–380 is the GS catalytic domain; sequence TRAKLREIID…RLLIKTVLKG (249 aa).

Belongs to the glutamine synthetase family. Homooctamer.

It is found in the plastid. The protein localises to the chloroplast. The catalysed reaction is L-glutamate + NH4(+) + ATP = L-glutamine + ADP + phosphate + H(+). The sequence is that of Glutamine synthetase, chloroplastic (GLN2) from Chlamydomonas reinhardtii (Chlamydomonas smithii).